A 132-amino-acid polypeptide reads, in one-letter code: ER membrane protein complex subunit 5 (132 aa).

Over 1–3 (MAS) the chain is Cytoplasmic. A helical membrane pass occupies residues 4–22 (SIWKGLVGIGLFALAHAAF). Over 23–43 (SAAQHRSYMRLTEKEDETLPI) the chain is Lumenal. Residues 44–63 (DIVLQTLLAFIVACYGIVHI) traverse the membrane as a helical segment. At 64 to 132 (AGEFKDMDAT…KLSKLESMHR (69 aa)) the chain is on the cytoplasmic side.

It belongs to the membrane magnesium transporter (TC 1.A.67) family. As to quaternary structure, component of the ER membrane protein complex (EMC).

It localises to the endoplasmic reticulum membrane. The protein resides in the golgi apparatus membrane. The protein localises to the early endosome membrane. Functionally, part of the endoplasmic reticulum membrane protein complex (EMC) that enables the energy-independent insertion into endoplasmic reticulum membranes of newly synthesized membrane proteins. Preferentially accommodates proteins with transmembrane domains that are weakly hydrophobic or contain destabilizing features such as charged and aromatic residues. Involved in the cotranslational insertion of multi-pass membrane proteins in which stop-transfer membrane-anchor sequences become ER membrane spanning helices. It is also required for the post-translational insertion of tail-anchored/TA proteins in endoplasmic reticulum membranes. By mediating the proper cotranslational insertion of N-terminal transmembrane domains in an N-exo topology, with translocated N-terminus in the lumen of the ER, controls the topology of multi-pass membrane proteins like the G protein-coupled receptors. By regulating the insertion of various proteins in membranes, it is indirectly involved in many cellular processes. May be involved in Mg(2+) transport. This Xenopus tropicalis (Western clawed frog) protein is ER membrane protein complex subunit 5.